The chain runs to 503 residues: Lysine--tRNA ligase (503 aa).

Residues Glu413 and Glu420 each coordinate Mg(2+).

The protein belongs to the class-II aminoacyl-tRNA synthetase family. As to quaternary structure, homodimer. Mg(2+) is required as a cofactor.

The protein resides in the cytoplasm. The catalysed reaction is tRNA(Lys) + L-lysine + ATP = L-lysyl-tRNA(Lys) + AMP + diphosphate. The chain is Lysine--tRNA ligase from Actinobacillus succinogenes (strain ATCC 55618 / DSM 22257 / CCUG 43843 / 130Z).